Reading from the N-terminus, the 237-residue chain is Pyrimidine 5'-nucleotidase PynA (237 aa).

Aspartate 9 (nucleophile) is an active-site residue. Positions 9, 11, and 181 each coordinate Mg(2+). The active-site Proton donor is aspartate 11.

The protein belongs to the HAD-like hydrolase superfamily. YjjG family. Homodimer. Mg(2+) is required as a cofactor. It depends on Mn(2+) as a cofactor.

It localises to the cytoplasm. The enzyme catalyses a ribonucleoside 5'-phosphate + H2O = a ribonucleoside + phosphate. In terms of biological role, nucleotidase that shows high phosphatase activity toward non-canonical pyrimidine nucleotides and three canonical nucleoside 5'-monophosphates (UMP, dUMP and dTMP), and no activity against IMP, UDP, GMP, AMP, UTP or pNPP. Appears to function as a house-cleaning nucleotidase in vivo, since the general nucleotidase activity of it allows it to protect cells against non-canonical pyrimidine derivatives such as 5-fluoro-2'-deoxyuridine monophosphate (5-FdUMP), and prevents the incorporation of potentially mutagenic nucleotides such as 5-bromo-2'-deoxyuridine (5-BrdU) into DNA. Is strictly specific to pyrimidine substrates with 5'-monophosphates and shows no activity against nucleoside di- and triphosphates. The sequence is that of Pyrimidine 5'-nucleotidase PynA from Streptococcus pneumoniae (strain ATCC BAA-255 / R6).